The following is a 311-amino-acid chain: Putative dihydroorotate dehydrogenase A (fumarate) (311 aa).

Substrate-binding positions include K45, 69-73 (NSMGL), and N128. 45 to 46 (KT) contacts FMN. An FMN-binding site is contributed by N128. Residue C131 is the Nucleophile of the active site. Positions 165 and 193 each coordinate FMN. 194–195 (NS) is a substrate binding site. Residues G220, 248–249 (GG), and 270–271 (GT) each bind FMN.

This sequence belongs to the dihydroorotate dehydrogenase family. Type 1 subfamily. As to quaternary structure, homodimer. FMN is required as a cofactor.

The protein resides in the cytoplasm. The catalysed reaction is (S)-dihydroorotate + fumarate = orotate + succinate. It participates in pyrimidine metabolism; UMP biosynthesis via de novo pathway. Functionally, catalyzes the conversion of dihydroorotate to orotate with fumarate as the electron acceptor. This is Putative dihydroorotate dehydrogenase A (fumarate) (pyrD) from Streptococcus pyogenes serotype M1.